A 492-amino-acid chain; its full sequence is High-affinity nickel transport protein (492 aa).

Residues 1 to 24 are Cytoplasmic-facing; that stretch reads MLSRWTRRVNESRLAQRKLTLLGR. A helical membrane pass occupies residues 25-45; that stretch reads AIALVVGELLFNAVCWIAAGI. At 46–50 the chain is on the extracellular side; sequence CFGKT. Residues 51–71 form a helical membrane-spanning segment; it reads DGILGLALLAWTIGLRHGLDA. At 72–94 the chain is on the cytoplasmic side; the sequence is DHISAIDNATRQLVSQGQLPITC. A helical membrane pass occupies residues 95-115; the sequence is GLFFSLGHSTIVIVVNVAIAV. Residues 116–136 lie on the Extracellular side of the membrane; that stretch reads SVDIYDKLDRVGSIGGIVGAA. A helical membrane pass occupies residues 137-157; that stretch reads VSASFLFLIACLNIYFLVGAI. Topologically, residues 158–210 are cytoplasmic; that stretch reads KQRRSMKRRQALGLPPDEDEGDPSKIYGGGCMVRVVGPILRAVDRPWKMYPVG. Residues 211–231 form a helical membrane-spanning segment; the sequence is VLFGFGFDTASSIALLAISAI. Residues 232-239 are Extracellular-facing; that stretch reads AQRGPNGD. The helical transmembrane segment at 240–260 threads the bilayer; the sequence is AISHGKIVILPFLFTAGMSLV. Over 261–382 the chain is Cytoplasmic; it reads DSLDSILMLY…AKANTMSSLS (122 aa). A helical membrane pass occupies residues 383 to 403; the sequence is IILTLLSILVALSISLIEIMG. The Extracellular segment spans residues 404–439; sequence LIGDNCTQCQDAANDPDGGGLAGSWWRAWARANDQS. N-linked (GlcNAc...) asparagine glycosylation is present at N408. The helical transmembrane segment at 440–460 threads the bilayer; it reads GYIGAAIVGCFAAILAGWYGA. At 461 to 492 the chain is on the cytoplasmic side; the sequence is KWGKKKWKARRDANAAIVLEDNEDDAAETPVA.

This sequence belongs to the NiCoT transporter (TC 2.A.52) family.

It localises to the cell membrane. High-affinity nickel-specific transporter responsible for nickel uptake and required for high levels of activity of urease URE1. Does not transport cobalt. Plays a role in host brain invasion. This Cryptococcus neoformans var. grubii serotype A (strain H99 / ATCC 208821 / CBS 10515 / FGSC 9487) (Filobasidiella neoformans var. grubii) protein is High-affinity nickel transport protein.